Reading from the N-terminus, the 229-residue chain is ATP synthase subunit a (229 aa).

The next 6 helical transmembrane spans lie at 25 to 45 (ADAI…SMLA), 82 to 102 (FFPL…IGLV), 104 to 124 (GFFP…IVFV), 142 to 162 (FLGP…IGHF), 181 to 201 (LVLM…MMLM), and 202 to 222 (GVLV…IYIQ).

The protein belongs to the ATPase A chain family. In terms of assembly, F-type ATPases have 2 components, CF(1) - the catalytic core - and CF(0) - the membrane proton channel. CF(1) has five subunits: alpha(3), beta(3), gamma(1), delta(1), epsilon(1). CF(0) has three main subunits: a(1), b(2) and c(9-12). The alpha and beta chains form an alternating ring which encloses part of the gamma chain. CF(1) is attached to CF(0) by a central stalk formed by the gamma and epsilon chains, while a peripheral stalk is formed by the delta and b chains.

Its subcellular location is the cell inner membrane. In terms of biological role, key component of the proton channel; it plays a direct role in the translocation of protons across the membrane. The sequence is that of ATP synthase subunit a from Geotalea uraniireducens (strain Rf4) (Geobacter uraniireducens).